A 371-amino-acid polypeptide reads, in one-letter code: Bifunctional enzyme IspD/IspF (371 aa).

Residues 1–210 (MSEISLIMLA…LDLPTPSFEI (210 aa)) are 2-C-methyl-D-erythritol 4-phosphate cytidylyltransferase. A 2-C-methyl-D-erythritol 2,4-cyclodiphosphate synthase region spans residues 211–371 (FTGNGFDVHE…NLKYFDWTRL (161 aa)). A divalent metal cation is bound by residues Asp-217 and His-219. Residues 217–219 (DVH) and 243–244 (HS) each bind 4-CDP-2-C-methyl-D-erythritol 2-phosphate. Position 251 (His-251) interacts with a divalent metal cation. Residues 265–267 (DIG), 270–274 (YPDTD), 341–344 (TTTE), Phe-348, and Arg-351 each bind 4-CDP-2-C-methyl-D-erythritol 2-phosphate.

It in the N-terminal section; belongs to the IspD/TarI cytidylyltransferase family. IspD subfamily. The protein in the C-terminal section; belongs to the IspF family. A divalent metal cation is required as a cofactor.

It carries out the reaction 2-C-methyl-D-erythritol 4-phosphate + CTP + H(+) = 4-CDP-2-C-methyl-D-erythritol + diphosphate. The enzyme catalyses 4-CDP-2-C-methyl-D-erythritol 2-phosphate = 2-C-methyl-D-erythritol 2,4-cyclic diphosphate + CMP. Its pathway is isoprenoid biosynthesis; isopentenyl diphosphate biosynthesis via DXP pathway; isopentenyl diphosphate from 1-deoxy-D-xylulose 5-phosphate: step 2/6. It functions in the pathway isoprenoid biosynthesis; isopentenyl diphosphate biosynthesis via DXP pathway; isopentenyl diphosphate from 1-deoxy-D-xylulose 5-phosphate: step 4/6. Functionally, bifunctional enzyme that catalyzes the formation of 4-diphosphocytidyl-2-C-methyl-D-erythritol from CTP and 2-C-methyl-D-erythritol 4-phosphate (MEP) (IspD), and catalyzes the conversion of 4-diphosphocytidyl-2-C-methyl-D-erythritol 2-phosphate (CDP-ME2P) to 2-C-methyl-D-erythritol 2,4-cyclodiphosphate (ME-CPP) with a corresponding release of cytidine 5-monophosphate (CMP) (IspF). The protein is Bifunctional enzyme IspD/IspF of Campylobacter jejuni subsp. jejuni serotype O:6 (strain 81116 / NCTC 11828).